Consider the following 631-residue polypeptide: Phosphomethylpyrimidine synthase (631 aa).

Residues N239, M268, Y297, H333, 353-355, 394-397, and E433 contribute to the substrate site; these read SRG and DGLR. H437 serves as a coordination point for Zn(2+). Y460 is a substrate binding site. H501 is a Zn(2+) binding site. Positions 581, 584, and 589 each coordinate [4Fe-4S] cluster.

This sequence belongs to the ThiC family. In terms of assembly, homodimer. The cofactor is [4Fe-4S] cluster.

It catalyses the reaction 5-amino-1-(5-phospho-beta-D-ribosyl)imidazole + S-adenosyl-L-methionine = 4-amino-2-methyl-5-(phosphooxymethyl)pyrimidine + CO + 5'-deoxyadenosine + formate + L-methionine + 3 H(+). Its pathway is cofactor biosynthesis; thiamine diphosphate biosynthesis. Its function is as follows. Catalyzes the synthesis of the hydroxymethylpyrimidine phosphate (HMP-P) moiety of thiamine from aminoimidazole ribotide (AIR) in a radical S-adenosyl-L-methionine (SAM)-dependent reaction. The chain is Phosphomethylpyrimidine synthase from Shigella dysenteriae serotype 1 (strain Sd197).